The chain runs to 333 residues: Small ribosomal subunit protein uS2 (333 aa).

It belongs to the universal ribosomal protein uS2 family.

This Azorhizobium caulinodans (strain ATCC 43989 / DSM 5975 / JCM 20966 / LMG 6465 / NBRC 14845 / NCIMB 13405 / ORS 571) protein is Small ribosomal subunit protein uS2.